The following is a 148-amino-acid chain: Large ribosomal subunit protein uL15 (148 aa).

The interval 1 to 47 (MAFSLENLRPAPGSRPKSKRVGRGSSSGKGKTSSRGHKGQGRGTGKV) is disordered.

This sequence belongs to the universal ribosomal protein uL15 family. In terms of assembly, part of the 50S ribosomal subunit.

Its function is as follows. Binds to the 23S rRNA. This Kosmotoga olearia (strain ATCC BAA-1733 / DSM 21960 / TBF 19.5.1) protein is Large ribosomal subunit protein uL15.